Consider the following 102-residue polypeptide: Small ribosomal subunit protein uS10 (102 aa).

Belongs to the universal ribosomal protein uS10 family. Part of the 30S ribosomal subunit.

Its function is as follows. Involved in the binding of tRNA to the ribosomes. In Opitutus terrae (strain DSM 11246 / JCM 15787 / PB90-1), this protein is Small ribosomal subunit protein uS10.